Here is a 274-residue protein sequence, read N- to C-terminus: tRNA-cytidine(32) 2-sulfurtransferase (274 aa).

The PP-loop motif motif lies at 40–45 (SGGKDS). The [4Fe-4S] cluster site is built by C115, C118, and C206.

This sequence belongs to the TtcA family. In terms of assembly, homodimer. Requires Mg(2+) as cofactor. [4Fe-4S] cluster serves as cofactor.

It localises to the cytoplasm. It carries out the reaction cytidine(32) in tRNA + S-sulfanyl-L-cysteinyl-[cysteine desulfurase] + AH2 + ATP = 2-thiocytidine(32) in tRNA + L-cysteinyl-[cysteine desulfurase] + A + AMP + diphosphate + H(+). It participates in tRNA modification. Its function is as follows. Catalyzes the ATP-dependent 2-thiolation of cytidine in position 32 of tRNA, to form 2-thiocytidine (s(2)C32). The sulfur atoms are provided by the cysteine/cysteine desulfurase (IscS) system. This is tRNA-cytidine(32) 2-sulfurtransferase from Pseudomonas syringae pv. syringae (strain B728a).